The chain runs to 195 residues: Imidazoleglycerol-phosphate dehydratase (195 aa).

Belongs to the imidazoleglycerol-phosphate dehydratase family.

Its subcellular location is the cytoplasm. The catalysed reaction is D-erythro-1-(imidazol-4-yl)glycerol 3-phosphate = 3-(imidazol-4-yl)-2-oxopropyl phosphate + H2O. Its pathway is amino-acid biosynthesis; L-histidine biosynthesis; L-histidine from 5-phospho-alpha-D-ribose 1-diphosphate: step 6/9. This chain is Imidazoleglycerol-phosphate dehydratase, found in Deinococcus radiodurans (strain ATCC 13939 / DSM 20539 / JCM 16871 / CCUG 27074 / LMG 4051 / NBRC 15346 / NCIMB 9279 / VKM B-1422 / R1).